The primary structure comprises 243 residues: LexA repressor (243 aa).

The tract at residues 1 to 30 (MSDDTGEFTDGSTESPADADGAGRRRAVDN) is disordered. Residues 21-30 (GAGRRRAVDN) are compositionally biased toward basic and acidic residues. The segment at residues 56 to 76 (IREIGDAVGLTSTSSVAHQLR) is a DNA-binding region (H-T-H motif). Catalysis depends on for autocatalytic cleavage activity residues S167 and K204.

This sequence belongs to the peptidase S24 family. In terms of assembly, homodimer.

The catalysed reaction is Hydrolysis of Ala-|-Gly bond in repressor LexA.. In terms of biological role, represses a number of genes involved in the response to DNA damage (SOS response), including recA and lexA. In the presence of single-stranded DNA, RecA interacts with LexA causing an autocatalytic cleavage which disrupts the DNA-binding part of LexA, leading to derepression of the SOS regulon and eventually DNA repair. This is LexA repressor from Mycolicibacterium smegmatis (strain ATCC 700084 / mc(2)155) (Mycobacterium smegmatis).